We begin with the raw amino-acid sequence, 412 residues long: Putative competence-damage inducible protein (412 aa).

It belongs to the CinA family.

In Clostridium perfringens (strain ATCC 13124 / DSM 756 / JCM 1290 / NCIMB 6125 / NCTC 8237 / Type A), this protein is Putative competence-damage inducible protein.